A 436-amino-acid chain; its full sequence is Ribosomal protein uS12 methylthiotransferase RimO (436 aa).

The MTTase N-terminal domain occupies 2-117 (RNVGIISLGC…IVDVIEEVKK (116 aa)). Residues Cys11, Cys47, Cys80, Cys154, Cys158, and Cys161 each contribute to the [4Fe-4S] cluster site. Residues 140-369 (TTPPYYAYLK…MEIQKQISYE (230 aa)) form the Radical SAM core domain. Positions 372–436 (MSKIGTKLEV…AFEYDLVGEY (65 aa)) constitute a TRAM domain.

This sequence belongs to the methylthiotransferase family. RimO subfamily. [4Fe-4S] cluster serves as cofactor.

The protein localises to the cytoplasm. It carries out the reaction L-aspartate(89)-[ribosomal protein uS12]-hydrogen + (sulfur carrier)-SH + AH2 + 2 S-adenosyl-L-methionine = 3-methylsulfanyl-L-aspartate(89)-[ribosomal protein uS12]-hydrogen + (sulfur carrier)-H + 5'-deoxyadenosine + L-methionine + A + S-adenosyl-L-homocysteine + 2 H(+). In terms of biological role, catalyzes the methylthiolation of an aspartic acid residue of ribosomal protein uS12. The protein is Ribosomal protein uS12 methylthiotransferase RimO of Caldanaerobacter subterraneus subsp. tengcongensis (strain DSM 15242 / JCM 11007 / NBRC 100824 / MB4) (Thermoanaerobacter tengcongensis).